We begin with the raw amino-acid sequence, 260 residues long: Sulfoquinovose 1-dehydrogenase (260 aa).

Catalysis depends on Y160, which acts as the Proton acceptor.

The protein belongs to the short-chain dehydrogenases/reductases (SDR) family.

It carries out the reaction 6-sulfo-D-quinovose + NAD(+) = 6-deoxy-6-sulfo-D-glucono-1,5-lactone + NADH + H(+). Its function is as follows. Catalyzes the oxidation of sulfoquinovose to 6-deoxy-6-sulfo-D-glucono-1,5-lactone, with a strong preference for NAD(+) as the electron acceptor. Is involved in a degradation pathway of sulfoquinovose (SQ) that allows P.putida SQ1 to use SQ as the sole carbon and energy source for growth. The sequence is that of Sulfoquinovose 1-dehydrogenase from Pseudomonas putida (Arthrobacter siderocapsulatus).